Here is an 81-residue protein sequence, read N- to C-terminus: Putative snRNP Sm-like protein (81 aa).

Residues arginine 13–proline 81 enclose the Sm domain.

Belongs to the snRNP Sm proteins family.

The chain is Putative snRNP Sm-like protein from Methanothermobacter thermautotrophicus (strain ATCC 29096 / DSM 1053 / JCM 10044 / NBRC 100330 / Delta H) (Methanobacterium thermoautotrophicum).